A 188-amino-acid chain; its full sequence is UPF0397 protein LCK_00164 (188 aa).

Helical transmembrane passes span 15-35 (VVAT…IAIP), 48-68 (GWLA…VGLI), 79-99 (GAPW…LGFG), 121-141 (WQAV…DIII), and 154-174 (AVTT…LLVA).

It belongs to the UPF0397 family.

The protein resides in the cell membrane. This Leuconostoc citreum (strain KM20) protein is UPF0397 protein LCK_00164.